Reading from the N-terminus, the 209-residue chain is Ribulose-phosphate 3-epimerase (209 aa).

Residue serine 8 participates in substrate binding. 4 residues coordinate a divalent metal cation: histidine 33, aspartate 35, histidine 64, and aspartate 170. Catalysis depends on aspartate 35, which acts as the Proton acceptor. Substrate is bound by residues histidine 64, aspartate 170–glycine 172, and glycine 191–serine 192. Catalysis depends on aspartate 170, which acts as the Proton donor.

This sequence belongs to the ribulose-phosphate 3-epimerase family. A divalent metal cation serves as cofactor.

The catalysed reaction is D-ribulose 5-phosphate = D-xylulose 5-phosphate. Its pathway is carbohydrate degradation. Catalyzes the reversible epimerization of D-ribulose 5-phosphate to D-xylulose 5-phosphate. The polypeptide is Ribulose-phosphate 3-epimerase (Mycoplasma genitalium (strain ATCC 33530 / DSM 19775 / NCTC 10195 / G37) (Mycoplasmoides genitalium)).